Reading from the N-terminus, the 147-residue chain is Globin, major polymeric component P1 (147 aa).

The 145-residue stretch at 2-146 folds into the Globin domain; it reads HLTADQVAAL…ISDACIAGLQ (145 aa). Residue H96 coordinates heme b.

It belongs to the globin family. In terms of assembly, polymer.

This chain is Globin, major polymeric component P1, found in Glycera dibranchiata (Bloodworm).